The sequence spans 138 residues: MQPIIKGAVSSTFKRALYNFGIKEKKSVNIEMGRTQQTKKIDQSLSKKLPKGTIYDPFDFSMGRIHLDRKYQANKNSNRNDIMKSGANPLEFYARPRILSRYVTSTGRIQHRDITGLSAKNQRRLSKAIRRCQAIGLM.

It belongs to the bacterial ribosomal protein bS18 family. In terms of assembly, component of the mitochondrial small ribosomal subunit. Mature mitochondrial ribosomes consist of a small (37S) and a large (54S) subunit. The 37S subunit contains at least 33 different proteins and 1 molecule of RNA (15S). The 54S subunit contains at least 45 different proteins and 1 molecule of RNA (21S).

Its subcellular location is the mitochondrion. The chain is Small ribosomal subunit protein bS18m (RSM18) from Saccharomyces cerevisiae (strain RM11-1a) (Baker's yeast).